Here is a 461-residue protein sequence, read N- to C-terminus: Putative ankyrin repeat protein FPV218 (461 aa).

ANK repeat units lie at residues 1–28, 31–61, 65–94, 96–116, 120–149, 153–182, 186–213, 217–248, 250–277, 281–312, 358–385, and 431–460; these read MLSL…HPDS, KGFY…NPNN, ETVS…DTSL, PLYV…DVNV, ESRS…NVNV, KGLS…RVNI, LGRL…PIDI, NGST…ALDN, CNSP…DITI, CGNT…LMRE, NGPT…NVQY, and LPYE…LKNK.

This Fowlpox virus (strain NVSL) (FPV) protein is Putative ankyrin repeat protein FPV218.